A 101-amino-acid polypeptide reads, in one-letter code: Integration host factor subunit beta (101 aa).

The interval 57-76 (PARAGRNPRTGEHVPVDQKS) is disordered.

Belongs to the bacterial histone-like protein family. Heterodimer of an alpha and a beta chain.

This protein is one of the two subunits of integration host factor, a specific DNA-binding protein that functions in genetic recombination as well as in transcriptional and translational control. This Nitrobacter winogradskyi (strain ATCC 25391 / DSM 10237 / CIP 104748 / NCIMB 11846 / Nb-255) protein is Integration host factor subunit beta.